A 564-amino-acid chain; its full sequence is CTP synthase (564 aa).

Residues 1-265 (MTKFVFVTGG…DEIVCHRLGI (265 aa)) form an amidoligase domain region. Ser-13 contributes to the CTP binding site. Residue Ser-13 coordinates UTP. Residues 14–19 (SLGKGI) and Asp-71 each bind ATP. Residues Asp-71 and Glu-139 each coordinate Mg(2+). CTP contacts are provided by residues 146–148 (DIE), 186–191 (KTKPTQ), and Lys-222. Residues 186–191 (KTKPTQ) and Lys-222 each bind UTP. A Glutamine amidotransferase type-1 domain is found at 290–543 (SIALVGKYVD…VRAAISFADK (254 aa)). Residue Gly-351 coordinates L-glutamine. The active-site Nucleophile; for glutamine hydrolysis is Cys-378. L-glutamine contacts are provided by residues 379 to 382 (LGMQ), Glu-402, and Arg-469. Residues His-516 and Glu-518 contribute to the active site.

Belongs to the CTP synthase family. In terms of assembly, homotetramer.

It carries out the reaction UTP + L-glutamine + ATP + H2O = CTP + L-glutamate + ADP + phosphate + 2 H(+). It catalyses the reaction L-glutamine + H2O = L-glutamate + NH4(+). The enzyme catalyses UTP + NH4(+) + ATP = CTP + ADP + phosphate + 2 H(+). Its pathway is pyrimidine metabolism; CTP biosynthesis via de novo pathway; CTP from UDP: step 2/2. Allosterically activated by GTP, when glutamine is the substrate; GTP has no effect on the reaction when ammonia is the substrate. The allosteric effector GTP functions by stabilizing the protein conformation that binds the tetrahedral intermediate(s) formed during glutamine hydrolysis. Inhibited by the product CTP, via allosteric rather than competitive inhibition. Its function is as follows. Catalyzes the ATP-dependent amination of UTP to CTP with either L-glutamine or ammonia as the source of nitrogen. Regulates intracellular CTP levels through interactions with the four ribonucleotide triphosphates. This Nitrosomonas eutropha (strain DSM 101675 / C91 / Nm57) protein is CTP synthase.